Reading from the N-terminus, the 288-residue chain is Probable coatomer subunit epsilon (288 aa).

Ser-262 bears the Phosphoserine mark.

This sequence belongs to the COPE family. In terms of assembly, oligomeric complex that consists of at least the alpha, beta, beta', gamma, delta, epsilon and zeta subunits.

The protein resides in the cytoplasm. The protein localises to the golgi apparatus membrane. It is found in the cytoplasmic vesicle. Its subcellular location is the COPI-coated vesicle membrane. In terms of biological role, the coatomer is a cytosolic protein complex that binds to dilysine motifs and reversibly associates with Golgi non-clathrin-coated vesicles, which further mediate biosynthetic protein transport from the ER, via the Golgi up to the trans Golgi network. The coatomer complex is required for budding from Golgi membranes, and is essential for the retrograde Golgi-to-ER transport of dilysine-tagged proteins. This chain is Probable coatomer subunit epsilon (sec28), found in Schizosaccharomyces pombe (strain 972 / ATCC 24843) (Fission yeast).